A 697-amino-acid polypeptide reads, in one-letter code: Potassium-transporting ATPase ATP-binding subunit (697 aa).

Transmembrane regions (helical) follow at residues 55–75 (PIMF…FLPS), 82–102 (GWFN…ANFA), 245–265 (LTLI…YLGF), and 271–291 (VLVA…LSAI). Asp-324 serves as the catalytic 4-aspartylphosphate intermediate. ATP-binding positions include Asp-361, Glu-365, 393–400 (FKAETRMS), and Lys-412. Residues Asp-535 and Asp-539 each coordinate Mg(2+). 3 helical membrane-spanning segments follow: residues 605-625 (FAII…LNIM), 633-653 (AILS…PLAM), and 677-697 (GGVI…GLFI).

The protein belongs to the cation transport ATPase (P-type) (TC 3.A.3) family. Type IA subfamily. The system is composed of three essential subunits: KdpA, KdpB and KdpC.

Its subcellular location is the cell membrane. The catalysed reaction is K(+)(out) + ATP + H2O = K(+)(in) + ADP + phosphate + H(+). Its function is as follows. Part of the high-affinity ATP-driven potassium transport (or Kdp) system, which catalyzes the hydrolysis of ATP coupled with the electrogenic transport of potassium into the cytoplasm. This subunit is responsible for energy coupling to the transport system and for the release of the potassium ions to the cytoplasm. The chain is Potassium-transporting ATPase ATP-binding subunit from Bacillus mycoides (strain KBAB4) (Bacillus weihenstephanensis).